Here is a 226-residue protein sequence, read N- to C-terminus: Cytidylate kinase (226 aa).

ATP is bound at residue 11-19; that stretch reads GPAGAGKST.

This sequence belongs to the cytidylate kinase family. Type 1 subfamily.

The protein localises to the cytoplasm. The catalysed reaction is CMP + ATP = CDP + ADP. It carries out the reaction dCMP + ATP = dCDP + ADP. This chain is Cytidylate kinase, found in Pelotomaculum thermopropionicum (strain DSM 13744 / JCM 10971 / SI).